The sequence spans 265 residues: H-2 class II histocompatibility antigen, A-D beta chain (265 aa).

The first 27 residues, methionine 1–glycine 27, serve as a signal peptide directing secretion. Positions glycine 28 to leucine 122 are beta-1. Topologically, residues glycine 28–lysine 226 are extracellular. 2 cysteine pairs are disulfide-bonded: cysteine 42–cysteine 106 and cysteine 145–cysteine 201. N-linked (GlcNAc...) asparagine glycosylation occurs at asparagine 46. The beta-2 stretch occupies residues glutamate 123–tryptophan 216. Residues proline 125 to threonine 213 enclose the Ig-like C1-type domain. Positions arginine 217 to lysine 226 are connecting peptide. A helical transmembrane segment spans residues methionine 227–isoleucine 247. Topologically, residues arginine 248–glutamine 265 are cytoplasmic.

Belongs to the MHC class II family. Ubiquitinated in immature dendritic cells leading to down-regulation of MHC class II.

It is found in the membrane. The chain is H-2 class II histocompatibility antigen, A-D beta chain (H2-Ab1) from Mus musculus (Mouse).